The following is an 808-amino-acid chain: MSISDDISPVPPAPVSEPNAGQDAGQDAAPAHMAARAEALRDQLNYHSHRYYVLDDAEISDAEYDALFRELQDIEAEWPSLRTPDSPTHRVGDTVVAALETQAHTLRMYSLDNAFSAEEWDGFIQRMLRAEPDAPTAFWCDPKMDGLALEVIYENGVFTTALTRGDGEKGEIVTTAMRTVRNLPLRLHGEGPHPARLEVRGEVVITRAEFDALNAARRGAGEKLFANPRNAAAGSVRQLDASVTAGRPLRFLAYGVGQVVWPAETSDGAASAAQGPEARWATHGQVMAALADYGFGTPPDARRCETPAQVMAYYEDLGRRRSELPFDIDGVVAKLDDLSAQAALGYTARAPRWAIALKFPAHQATTRLEHIAIQVGRTGVLTPVAELAPVAVGGVTVSRATLHNEDEIRAKDLRVGDMVVVQRAGDVIPEVVRPLVDQRPASGLPEFEFPAECPVCHTPVRREPGEAAWRCVNVGCPAVVRQSIIHFVSKAGLDIQGVGRRWVELLVDRGKVTSPADLFGLDKQTLLAFERMGPKLAENFIAAFDTARTGATLNRLICALGIRHVGEQTARTLAAHFADLDALGAAQAETLQQLPDIGPEVAASIRAFFANEGNRALLERLRGVGLWPVRPVRPEADAAGAPGEGSGPLAGLRVLFTGSLTTLTRSDAERRAVAAGANILGSVSKKLDLLVVGDKPGSKLDKATKLGIRVLREQEFLDLLEGRGGDVPEDGDGAPGNEDEAPEVSADVPAAPEVLADAPAAISADASSGVAPGVSGGPDRADMTDRTVRTDSVDAPAMPRKKDQHSLL.

The tract at residues 1–30 (MSISDDISPVPPAPVSEPNAGQDAGQDAAP) is disordered. Over residues 18–30 (PNAGQDAGQDAAP) the composition is skewed to low complexity. NAD(+) is bound by residues 61-65 (DAEYD), 110-111 (SL), and D141. The active-site N6-AMP-lysine intermediate is the K143. R164, E202, K334, and K358 together coordinate NAD(+). The Zn(2+) site is built by C453, C456, C471, and C476. In terms of domain architecture, BRCT spans 644–733 (EGSGPLAGLR…GGDVPEDGDG (90 aa)). The interval 720–808 (LEGRGGDVPE…PRKKDQHSLL (89 aa)) is disordered. Over residues 727–742 (VPEDGDGAPGNEDEAP) the composition is skewed to acidic residues. A compositionally biased stretch (low complexity) spans 746-773 (ADVPAAPEVLADAPAAISADASSGVAPG). A compositionally biased stretch (basic and acidic residues) spans 779-792 (DRADMTDRTVRTDS).

Belongs to the NAD-dependent DNA ligase family. LigA subfamily. The cofactor is Mg(2+). Mn(2+) is required as a cofactor.

It catalyses the reaction NAD(+) + (deoxyribonucleotide)n-3'-hydroxyl + 5'-phospho-(deoxyribonucleotide)m = (deoxyribonucleotide)n+m + AMP + beta-nicotinamide D-nucleotide.. Its function is as follows. DNA ligase that catalyzes the formation of phosphodiester linkages between 5'-phosphoryl and 3'-hydroxyl groups in double-stranded DNA using NAD as a coenzyme and as the energy source for the reaction. It is essential for DNA replication and repair of damaged DNA. The protein is DNA ligase of Nitratidesulfovibrio vulgaris (strain DSM 19637 / Miyazaki F) (Desulfovibrio vulgaris).